Consider the following 137-residue polypeptide: Large-conductance mechanosensitive channel (137 aa).

The next 2 membrane-spanning stretches (helical) occupy residues 10-30 (FAMRGNVVDLAVGVIIGAAFG) and 76-96 (GAFIQNIFDFVIVAFAIFMAI).

The protein belongs to the MscL family. Homopentamer.

Its subcellular location is the cell inner membrane. Its function is as follows. Channel that opens in response to stretch forces in the membrane lipid bilayer. May participate in the regulation of osmotic pressure changes within the cell. This Pectobacterium carotovorum subsp. carotovorum (strain PC1) protein is Large-conductance mechanosensitive channel.